The primary structure comprises 417 residues: MLLSVPLLLGLLGLAVAEPAVYFKEQFLDGDGWTSRWIESKHKSDFGKFVLSSGKFYGDEEKDKGLQTSQDARFYALSASFEPFSNKGQTLVVQFTVKHEQNIDCGGGYVKLFPNSLDQTDMHGDSEYNIMFGPDICGPGTKKVHVIFNYKGKNVLINKDIRCKDDEFTHLYTLIVRPDNTYEVKIDNSQVESGSLEDDWDFLPPKKIKDPDASKPEDWDERAKIDDPTDSKPEDWDKPEHIPDPDAKKPEDWDEEMDGEWEPPVIQNPEYKGEWKPRQIDNPDYKGTWIHPEIDNPEYSPDPSIYAYDNFGVLGLDLWQVKSGTIFDNFLITNDEAYAEEFGNETWGVTKAAEKQMKDKQDEEQRLKEEEEDKKRKEEEEAEDKEDDEDKDEDEEDEEDKEEDEEEDVPGQAKDEL.

The N-terminal stretch at 1 to 17 is a signal peptide; it reads MLLSVPLLLGLLGLAVA. The segment at 18–197 is N-domain; that stretch reads EPAVYFKEQF…NSQVESGSLE (180 aa). Ca(2+) is bound at residue Q26. K48 carries the N6-acetyllysine modification. Positions 62 and 64 each coordinate Ca(2+). K64 is modified (N6-(2-hydroxyisobutyryl)lysine). Cysteines 105 and 137 form a disulfide. Residues Y109, K111, Y128, and D135 each contribute to the an alpha-D-glucoside site. N6-acetyllysine is present on K159. Residues 191–202 form a 1-1 repeat; that stretch reads VESGSLEDDWDF. The segment at 191 to 255 is 4 X approximate repeats; sequence VESGSLEDDW…DAKKPEDWDE (65 aa). A disordered region spans residues 193 to 278; it reads SGSLEDDWDF…PEYKGEWKPR (86 aa). Residues 198–308 form a P-domain region; it reads DDWDFLPPKK…YSPDPSIYAY (111 aa). A compositionally biased stretch (basic and acidic residues) spans 207 to 251; that stretch reads KIKDPDASKPEDWDERAKIDDPTDSKPEDWDKPEHIPDPDAKKPE. Position 209 is an N6-acetyllysine (K209). Tandem repeats lie at residues 210–221, 227–238, 244–255, 259–269, 273–283, and 287–297. Residues 237-270 are interaction with PPIB; that stretch reads DKPEHIPDPDAKKPEDWDEEMDGEWEPPVIQNPE. Over residues 252-261 the composition is skewed to acidic residues; the sequence is DWDEEMDGEW. A 3 X approximate repeats region spans residues 259–297; sequence GEWEPPVIQNPEYKGEWKPRQIDNPDYKGTWIHPEIDNP. Positions 309–417 are C-domain; sequence DNFGVLGLDL…DVPGQAKDEL (109 aa). D317 contributes to the an alpha-D-glucoside binding site. A Ca(2+)-binding site is contributed by D328. N344 carries N-linked (GlcNAc...) asparagine glycosylation. Residues 350-417 form a disordered region; sequence TKAAEKQMKD…DVPGQAKDEL (68 aa). A compositionally biased stretch (basic and acidic residues) spans 352-379; the sequence is AAEKQMKDKQDEEQRLKEEEEDKKRKEE. Residues 380-409 are compositionally biased toward acidic residues; that stretch reads EEAEDKEDDEDKDEDEEDEEDKEEDEEEDV. Positions 414 to 417 match the Prevents secretion from ER motif; the sequence is KDEL.

It belongs to the calreticulin family. Monomer. Component of an EIF2 complex at least composed of CELF1/CUGBP1, CALR, CALR3, EIF2S1, EIF2S2, HSP90B1 and HSPA5. Interacts with PDIA3/ERp57 and SPACA9. Interacts with TRIM21. Interacts with NR3C1. Interacts with PPIB. Interacts (via P-domain) with PDIA5. Interacts with GABARAP. Interacts with HLA-E-B2M and HLA-G-B2M complexes. Interacts with HLA-F. Interacts with CLCC1.

It is found in the endoplasmic reticulum lumen. The protein resides in the cytoplasm. Its subcellular location is the cytosol. It localises to the secreted. The protein localises to the extracellular space. It is found in the extracellular matrix. The protein resides in the cell surface. Its subcellular location is the sarcoplasmic reticulum lumen. It localises to the cytoplasmic vesicle. The protein localises to the secretory vesicle. It is found in the cortical granule. The protein resides in the cytolytic granule. Functionally, calcium-binding chaperone that promotes folding, oligomeric assembly and quality control in the endoplasmic reticulum (ER) via the calreticulin/calnexin cycle. This lectin interacts transiently with almost all of the monoglucosylated glycoproteins that are synthesized in the ER. Interacts with the DNA-binding domain of NR3C1 and mediates its nuclear export. Involved in maternal gene expression regulation. May participate in oocyte maturation via the regulation of calcium homeostasis. Present in the cortical granules of non-activated oocytes, is exocytosed during the cortical reaction in response to oocyte activation and might participate in the block to polyspermy. In Homo sapiens (Human), this protein is Calreticulin.